Consider the following 145-residue polypeptide: Large ribosomal subunit protein uL24 (145 aa).

Disordered regions lie at residues Met1–Ala21 and Lys122–Glu145. Lys136 is covalently cross-linked (Glycyl lysine isopeptide (Lys-Gly) (interchain with G-Cter in SUMO2)). Thr139 is modified (phosphothreonine).

This sequence belongs to the universal ribosomal protein uL24 family. Component of the large ribosomal subunit. Interacts with DHX33. Post-translationally, ufmylated by UFL1 in response to endoplasmic reticulum stress, promoting reticulophagy of endoplasmic reticulum sheets.

It is found in the cytoplasm. In terms of biological role, component of the large ribosomal subunit. The ribosome is a large ribonucleoprotein complex responsible for the synthesis of proteins in the cell. The protein is Large ribosomal subunit protein uL24 (RPL26) of Bos taurus (Bovine).